The primary structure comprises 229 residues: Uracil-DNA glycosylase (229 aa).

Residue Asp-64 is the Proton acceptor of the active site.

This sequence belongs to the uracil-DNA glycosylase (UDG) superfamily. UNG family.

The protein resides in the cytoplasm. It carries out the reaction Hydrolyzes single-stranded DNA or mismatched double-stranded DNA and polynucleotides, releasing free uracil.. Functionally, excises uracil residues from the DNA which can arise as a result of misincorporation of dUMP residues by DNA polymerase or due to deamination of cytosine. This is Uracil-DNA glycosylase from Geobacillus thermodenitrificans (strain NG80-2).